Reading from the N-terminus, the 97-residue chain is Large ribosomal subunit protein uL23 (97 aa).

Belongs to the universal ribosomal protein uL23 family. In terms of assembly, part of the 50S ribosomal subunit. Contacts protein L29, and trigger factor when it is bound to the ribosome.

Functionally, one of the early assembly proteins it binds 23S rRNA. One of the proteins that surrounds the polypeptide exit tunnel on the outside of the ribosome. Forms the main docking site for trigger factor binding to the ribosome. In Brucella canis (strain ATCC 23365 / NCTC 10854 / RM-666), this protein is Large ribosomal subunit protein uL23.